The primary structure comprises 212 residues: Protein-L-isoaspartate O-methyltransferase (212 aa).

The active site involves Ser60.

Belongs to the methyltransferase superfamily. L-isoaspartyl/D-aspartyl protein methyltransferase family.

Its subcellular location is the cytoplasm. It carries out the reaction [protein]-L-isoaspartate + S-adenosyl-L-methionine = [protein]-L-isoaspartate alpha-methyl ester + S-adenosyl-L-homocysteine. In terms of biological role, catalyzes the methyl esterification of L-isoaspartyl residues in peptides and proteins that result from spontaneous decomposition of normal L-aspartyl and L-asparaginyl residues. It plays a role in the repair and/or degradation of damaged proteins. The chain is Protein-L-isoaspartate O-methyltransferase from Methanococcus maripaludis (strain C6 / ATCC BAA-1332).